A 505-amino-acid polypeptide reads, in one-letter code: Pentatricopeptide repeat-containing protein At2g17033 (505 aa).

PPR repeat units lie at residues 243–277 (KTQA…KIKP), 278–312 (GLFE…GHKI), and 313–347 (DTVC…NVPF). The Smr domain maps to 413–503 (LDLHGMHLSS…AKGKTVKEWL (91 aa)).

Belongs to the PPR family. P subfamily.

The sequence is that of Pentatricopeptide repeat-containing protein At2g17033 from Arabidopsis thaliana (Mouse-ear cress).